Here is a 213-residue protein sequence, read N- to C-terminus: MIPAPPFLQATALTCERDGRMLFENLDLQVRTGDMLQVSGPNGSGKTSLLRLLCGLMQPTAGHVLLNGQPAGRQPTAPGLNLLWVGHASALKDLLTPLENLSWLCALHHPADADAIFNALDAVGLAGFEDVPCHTLSAGQQRRVALARLYLPGPPLWLLDEPFTALDRQGIAQLENHLAGHCEKGGMIIMTTHHTLSRLPAGYRDIDLGQWAA.

The region spanning 8-213 (LQATALTCER…RDIDLGQWAA (206 aa)) is the ABC transporter domain. 40 to 47 (GPNGSGKT) lines the ATP pocket.

Belongs to the ABC transporter superfamily. CcmA exporter (TC 3.A.1.107) family. The complex is composed of two ATP-binding proteins (CcmA) and two transmembrane proteins (CcmB).

It is found in the cell inner membrane. The enzyme catalyses heme b(in) + ATP + H2O = heme b(out) + ADP + phosphate + H(+). Functionally, part of the ABC transporter complex CcmAB involved in the biogenesis of c-type cytochromes; once thought to export heme, this seems not to be the case, but its exact role is uncertain. Responsible for energy coupling to the transport system. In Pseudomonas savastanoi pv. phaseolicola (strain 1448A / Race 6) (Pseudomonas syringae pv. phaseolicola (strain 1448A / Race 6)), this protein is Cytochrome c biogenesis ATP-binding export protein CcmA.